Reading from the N-terminus, the 43-residue chain is Protein PsbN (43 aa).

Residues 5-27 (TLVTISISCLLVSFTGYALYTAF) form a helical membrane-spanning segment.

It belongs to the PsbN family.

It localises to the plastid. It is found in the chloroplast thylakoid membrane. Its function is as follows. May play a role in photosystem I and II biogenesis. This Pinus koraiensis (Korean pine) protein is Protein PsbN.